Reading from the N-terminus, the 132-residue chain is Large ribosomal subunit protein uL14 (132 aa).

This sequence belongs to the universal ribosomal protein uL14 family. In terms of assembly, part of the 50S ribosomal subunit. Forms a cluster with proteins L3 and L24e, part of which may contact the 16S rRNA in 2 intersubunit bridges.

Its function is as follows. Binds to 23S rRNA. Forms part of two intersubunit bridges in the 70S ribosome. This chain is Large ribosomal subunit protein uL14, found in Methanosarcina barkeri (strain Fusaro / DSM 804).